Here is a 261-residue protein sequence, read N- to C-terminus: Imidazole glycerol phosphate synthase subunit HisF (261 aa).

Active-site residues include aspartate 16 and aspartate 135.

This sequence belongs to the HisA/HisF family. In terms of assembly, heterodimer of HisH and HisF.

The protein localises to the cytoplasm. It catalyses the reaction 5-[(5-phospho-1-deoxy-D-ribulos-1-ylimino)methylamino]-1-(5-phospho-beta-D-ribosyl)imidazole-4-carboxamide + L-glutamine = D-erythro-1-(imidazol-4-yl)glycerol 3-phosphate + 5-amino-1-(5-phospho-beta-D-ribosyl)imidazole-4-carboxamide + L-glutamate + H(+). It participates in amino-acid biosynthesis; L-histidine biosynthesis; L-histidine from 5-phospho-alpha-D-ribose 1-diphosphate: step 5/9. In terms of biological role, IGPS catalyzes the conversion of PRFAR and glutamine to IGP, AICAR and glutamate. The HisF subunit catalyzes the cyclization activity that produces IGP and AICAR from PRFAR using the ammonia provided by the HisH subunit. The protein is Imidazole glycerol phosphate synthase subunit HisF of Mycobacterium marinum (strain ATCC BAA-535 / M).